A 580-amino-acid chain; its full sequence is Proline--tRNA ligase (580 aa).

This sequence belongs to the class-II aminoacyl-tRNA synthetase family. ProS type 1 subfamily. Homodimer.

The protein localises to the cytoplasm. It catalyses the reaction tRNA(Pro) + L-proline + ATP = L-prolyl-tRNA(Pro) + AMP + diphosphate. In terms of biological role, catalyzes the attachment of proline to tRNA(Pro) in a two-step reaction: proline is first activated by ATP to form Pro-AMP and then transferred to the acceptor end of tRNA(Pro). As ProRS can inadvertently accommodate and process non-cognate amino acids such as alanine and cysteine, to avoid such errors it has two additional distinct editing activities against alanine. One activity is designated as 'pretransfer' editing and involves the tRNA(Pro)-independent hydrolysis of activated Ala-AMP. The other activity is designated 'posttransfer' editing and involves deacylation of mischarged Ala-tRNA(Pro). The misacylated Cys-tRNA(Pro) is not edited by ProRS. The chain is Proline--tRNA ligase from Albidiferax ferrireducens (strain ATCC BAA-621 / DSM 15236 / T118) (Rhodoferax ferrireducens).